Consider the following 270-residue polypeptide: Regulatory protein RecX (270 aa).

This sequence belongs to the RecX family.

Its subcellular location is the cytoplasm. Its function is as follows. Modulates RecA activity. The sequence is that of Regulatory protein RecX from Bacillus anthracis (strain A0248).